Reading from the N-terminus, the 375-residue chain is tRNA-specific 2-thiouridylase MnmA (375 aa).

Residues 9–16 and leucine 35 contribute to the ATP site; that span reads AMSGGVDS. Cysteine 105 serves as the catalytic Nucleophile. Cysteine 105 and cysteine 201 are joined by a disulfide. An ATP-binding site is contributed by glycine 129. An interaction with tRNA region spans residues 151–153; the sequence is KNQ. Catalysis depends on cysteine 201, which acts as the Cysteine persulfide intermediate. Residues 307–308 form an interaction with tRNA region; it reads RY.

It belongs to the MnmA/TRMU family.

Its subcellular location is the cytoplasm. It carries out the reaction S-sulfanyl-L-cysteinyl-[protein] + uridine(34) in tRNA + AH2 + ATP = 2-thiouridine(34) in tRNA + L-cysteinyl-[protein] + A + AMP + diphosphate + H(+). Catalyzes the 2-thiolation of uridine at the wobble position (U34) of tRNA, leading to the formation of s(2)U34. The protein is tRNA-specific 2-thiouridylase MnmA of Leptospira interrogans serogroup Icterohaemorrhagiae serovar copenhageni (strain Fiocruz L1-130).